The sequence spans 234 residues: NAD-dependent protein deacylase (234 aa).

Positions 1–234 (MTKQVRIVVL…LVPHYLAQFL (234 aa)) constitute a Deacetylase sirtuin-type domain. Residue 12–31 (GAGISAESGIRTFRATDGLW) coordinates NAD(+). Y56 and R59 together coordinate substrate. 93 to 96 (QNVD) contacts NAD(+). H111 functions as the Proton acceptor in the catalytic mechanism. C119 and C138 together coordinate Zn(2+). NAD(+) is bound by residues 178 to 180 (GTS), 204 to 206 (NLE), and A222.

Belongs to the sirtuin family. Class III subfamily. Requires Zn(2+) as cofactor.

Its subcellular location is the cytoplasm. The catalysed reaction is N(6)-acetyl-L-lysyl-[protein] + NAD(+) + H2O = 2''-O-acetyl-ADP-D-ribose + nicotinamide + L-lysyl-[protein]. It carries out the reaction N(6)-succinyl-L-lysyl-[protein] + NAD(+) + H2O = 2''-O-succinyl-ADP-D-ribose + nicotinamide + L-lysyl-[protein]. Functionally, NAD-dependent lysine deacetylase and desuccinylase that specifically removes acetyl and succinyl groups on target proteins. Modulates the activities of several proteins which are inactive in their acylated form. This is NAD-dependent protein deacylase from Pasteurella multocida (strain Pm70).